Reading from the N-terminus, the 284-residue chain is Pantothenate synthetase (284 aa).

30–37 provides a ligand contact to ATP; that stretch reads MGNLHDGH. Residue histidine 37 is the Proton donor of the active site. Glutamine 61 is a binding site for (R)-pantoate. Glutamine 61 serves as a coordination point for beta-alanine. An ATP-binding site is contributed by 149–152; it reads GEKD. Residue glutamine 155 participates in (R)-pantoate binding. Residues valine 178 and 186-189 contribute to the ATP site; that span reads LSSR.

The protein belongs to the pantothenate synthetase family. Homodimer.

It localises to the cytoplasm. It carries out the reaction (R)-pantoate + beta-alanine + ATP = (R)-pantothenate + AMP + diphosphate + H(+). The protein operates within cofactor biosynthesis; (R)-pantothenate biosynthesis; (R)-pantothenate from (R)-pantoate and beta-alanine: step 1/1. Functionally, catalyzes the condensation of pantoate with beta-alanine in an ATP-dependent reaction via a pantoyl-adenylate intermediate. The polypeptide is Pantothenate synthetase (Enterobacter sp. (strain 638)).